Consider the following 812-residue polypeptide: Phosphoenolpyruvate synthase (812 aa).

H430 serves as the catalytic Tele-phosphohistidine intermediate. Positions 520, 588, 690, 711, 712, 713, and 714 each coordinate substrate. E690 provides a ligand contact to Mg(2+). Residue D714 coordinates Mg(2+). The active-site Proton donor is C761.

This sequence belongs to the PEP-utilizing enzyme family. The cofactor is Mg(2+).

It carries out the reaction pyruvate + ATP + H2O = phosphoenolpyruvate + AMP + phosphate + 2 H(+). The protein operates within carbohydrate biosynthesis; gluconeogenesis. In terms of biological role, catalyzes the phosphorylation of pyruvate to phosphoenolpyruvate. The polypeptide is Phosphoenolpyruvate synthase (ppsA) (Helicobacter pylori (strain ATCC 700392 / 26695) (Campylobacter pylori)).